The following is an 87-amino-acid chain: Small ribosomal subunit protein bS18B (87 aa).

It belongs to the bacterial ribosomal protein bS18 family. As to quaternary structure, part of the 30S ribosomal subunit. Forms a tight heterodimer with protein bS6.

Its function is as follows. Binds as a heterodimer with protein bS6 to the central domain of the 16S rRNA, where it helps stabilize the platform of the 30S subunit. This Mycolicibacterium vanbaalenii (strain DSM 7251 / JCM 13017 / BCRC 16820 / KCTC 9966 / NRRL B-24157 / PYR-1) (Mycobacterium vanbaalenii) protein is Small ribosomal subunit protein bS18B.